We begin with the raw amino-acid sequence, 100 residues long: uncharacterized protein (100 aa).

It localises to the secreted. This is an uncharacterized protein from Mycobacterium leprae (strain TN).